The chain runs to 123 residues: Large ribosomal subunit protein mL52 (123 aa).

A mitochondrion-targeting transit peptide spans 1-23; sequence MAALGTVLFTGVRRLHCSVAAWA. Basic and acidic residues predominate over residues 99-109; it reads QEEQRKQENAL. Residues 99 to 123 form a disordered region; that stretch reads QEEQRKQENALKPKGASLKSPLPSQ.

This sequence belongs to the mitochondrion-specific ribosomal protein mL52 family. As to quaternary structure, component of the mitochondrial large ribosomal subunit (mt-LSU). Mature mammalian 55S mitochondrial ribosomes consist of a small (28S) and a large (39S) subunit. The 28S small subunit contains a 12S ribosomal RNA (12S mt-rRNA) and 30 different proteins. The 39S large subunit contains a 16S rRNA (16S mt-rRNA), a copy of mitochondrial valine transfer RNA (mt-tRNA(Val)), which plays an integral structural role, and 52 different proteins. mL52 connects the central protuberance to the body of the ribosome.

It localises to the mitochondrion. This chain is Large ribosomal subunit protein mL52 (MRPL52), found in Homo sapiens (Human).